A 259-amino-acid chain; its full sequence is Phosphoribosylaminoimidazole-succinocarboxamide synthase (259 aa).

Belongs to the SAICAR synthetase family.

The enzyme catalyses 5-amino-1-(5-phospho-D-ribosyl)imidazole-4-carboxylate + L-aspartate + ATP = (2S)-2-[5-amino-1-(5-phospho-beta-D-ribosyl)imidazole-4-carboxamido]succinate + ADP + phosphate + 2 H(+). It functions in the pathway purine metabolism; IMP biosynthesis via de novo pathway; 5-amino-1-(5-phospho-D-ribosyl)imidazole-4-carboxamide from 5-amino-1-(5-phospho-D-ribosyl)imidazole-4-carboxylate: step 1/2. The polypeptide is Phosphoribosylaminoimidazole-succinocarboxamide synthase (Hyphomonas neptunium (strain ATCC 15444)).